Reading from the N-terminus, the 259-residue chain is BTB/POZ domain-containing protein KCTD4 (259 aa).

The disordered stretch occupies residues 1–22 (MEHKINRREKEKDYEGKHNSLE). A BTB domain is found at 33–134 (TLMTLNVGGY…EVKSRWEKEQ (102 aa)).

The protein is BTB/POZ domain-containing protein KCTD4 (KCTD4) of Bos taurus (Bovine).